We begin with the raw amino-acid sequence, 589 residues long: Protein drl-1 (589 aa).

Residues 1 to 51 form a disordered region; it reads MHSEEKYLHIPNNTKYPEIIVEEEEEDPSEEERSELSETDDVATPLRPSDT. Acidic residues predominate over residues 20-41; the sequence is IVEEEEEDPSEEERSELSETDD. In terms of domain architecture, Protein kinase spans 97–373; it reads WRINEDVMKD…QNLLESHGSK (277 aa). The next 3 helical transmembrane spans lie at 429-449, 456-476, and 491-511; these read GFIP…VLLV, LCAA…IFLI, and GFVV…TTLC.

It belongs to the protein kinase superfamily. STE Ser/Thr protein kinase family. In terms of tissue distribution, expressed in vulval and body wall muscles, hypodermis, seam cells and tissues next to pharynx and anus.

It localises to the membrane. In terms of biological role, negatively regulates lifespan and health span probably by participating in nutrient sensing. This chain is Protein drl-1, found in Caenorhabditis elegans.